The sequence spans 181 residues: uncharacterized protein (181 aa).

The segment at 162-181 (QARGPAGTRTPQRRCSSHEA) is disordered.

This is an uncharacterized protein from Homo sapiens (Human).